The sequence spans 488 residues: Glutamyl-tRNA(Gln) amidotransferase subunit A (488 aa).

Active-site charge relay system residues include Lys-77 and Ser-152. Residue Ser-176 is the Acyl-ester intermediate of the active site.

The protein belongs to the amidase family. GatA subfamily. As to quaternary structure, heterotrimer of A, B and C subunits.

The enzyme catalyses L-glutamyl-tRNA(Gln) + L-glutamine + ATP + H2O = L-glutaminyl-tRNA(Gln) + L-glutamate + ADP + phosphate + H(+). Functionally, allows the formation of correctly charged Gln-tRNA(Gln) through the transamidation of misacylated Glu-tRNA(Gln) in organisms which lack glutaminyl-tRNA synthetase. The reaction takes place in the presence of glutamine and ATP through an activated gamma-phospho-Glu-tRNA(Gln). This chain is Glutamyl-tRNA(Gln) amidotransferase subunit A, found in Streptococcus thermophilus (strain CNRZ 1066).